The following is a 101-amino-acid chain: A-type ATP synthase subunit F (101 aa).

The protein belongs to the V-ATPase F subunit family. As to quaternary structure, has multiple subunits with at least A(3), B(3), C, D, E, F, H, I and proteolipid K(x).

The protein localises to the cell membrane. Component of the A-type ATP synthase that produces ATP from ADP in the presence of a proton gradient across the membrane. The polypeptide is A-type ATP synthase subunit F (Archaeoglobus fulgidus (strain ATCC 49558 / DSM 4304 / JCM 9628 / NBRC 100126 / VC-16)).